Here is a 303-residue protein sequence, read N- to C-terminus: Dehydrodolichyl diphosphate synthase 1 (303 aa).

Residues 14–34 (LLFLFLIPCLFITSYIGFPVF) form a helical membrane-spanning segment.

It belongs to the UPP synthase family. Mg(2+) is required as a cofactor. As to expression, expressed in low levels in the whole plant. Preferentially expressed in roots.

It localises to the endoplasmic reticulum membrane. The catalysed reaction is n isopentenyl diphosphate + (2E,6E)-farnesyl diphosphate = a di-trans,poly-cis-polyprenyl diphosphate + n diphosphate. It participates in protein modification; protein glycosylation. In terms of biological role, catalyzes cis-prenyl chain elongation to produce the polyprenyl backbone of dolichol, a glycosyl carrier-lipid required for the biosynthesis of several classes of glycoprotein. In Arabidopsis thaliana (Mouse-ear cress), this protein is Dehydrodolichyl diphosphate synthase 1 (DPS).